The chain runs to 878 residues: Multiple C2 and transmembrane domain-containing protein 2 (878 aa).

Disordered regions lie at residues 20–40 and 143–178; these read LINLSKKKAKKSPSKPLDLRV and KPSLGRDAPEEHDKTHGNDDLNASMTSQHFEEESTL. The segment covering 149 to 161 has biased composition (basic and acidic residues); that stretch reads DAPEEHDKTHGND. 3 C2 domains span residues 177–292, 334–452, and 486–607; these read TLGE…EHIL, SKSS…CLEL, and PSER…CYVL. Residues aspartate 210, aspartate 216, aspartate 263, aspartate 265, and aspartate 270 each contribute to the Ca(2+) site. Residues aspartate 525, aspartate 531, aspartate 577, aspartate 579, and aspartate 585 each contribute to the Ca(2+) site. The helical transmembrane segment at 694–714 threads the bilayer; it reads FVVFLVTVWNFELYMIPLALL. A disordered region spans residues 728–752; that stretch reads KASSTQDSQESTDVEEEGKEEEKES. Over residues 737-746 the composition is skewed to acidic residues; sequence ESTDVEEEGK. The chain crosses the membrane as a helical span at residues 794–814; that stretch reads PFLSLLACLILAITTVILYFI.

This sequence belongs to the MCTP family. It depends on Ca(2+) as a cofactor.

It localises to the membrane. Functionally, might play a role in the development of cardiac outflow tract. This Mus musculus (Mouse) protein is Multiple C2 and transmembrane domain-containing protein 2 (Mctp2).